Reading from the N-terminus, the 346-residue chain is Methylthioribose-1-phosphate isomerase (346 aa).

Residues 46 to 48 (RGA), Arg89, and Gln196 contribute to the substrate site. Asp237 (proton donor) is an active-site residue. Residue 247 to 248 (NK) coordinates substrate.

It belongs to the eIF-2B alpha/beta/delta subunits family. MtnA subfamily.

It carries out the reaction 5-(methylsulfanyl)-alpha-D-ribose 1-phosphate = 5-(methylsulfanyl)-D-ribulose 1-phosphate. It functions in the pathway amino-acid biosynthesis; L-methionine biosynthesis via salvage pathway; L-methionine from S-methyl-5-thio-alpha-D-ribose 1-phosphate: step 1/6. Catalyzes the interconversion of methylthioribose-1-phosphate (MTR-1-P) into methylthioribulose-1-phosphate (MTRu-1-P). In Citrifermentans bemidjiense (strain ATCC BAA-1014 / DSM 16622 / JCM 12645 / Bem) (Geobacter bemidjiensis), this protein is Methylthioribose-1-phosphate isomerase.